Here is a 208-residue protein sequence, read N- to C-terminus: uncharacterized protein (208 aa).

The region spanning 4 to 71 (DYYAILNITP…SRRAQYDRES (68 aa)) is the J domain. Positions 67-100 (YDRESASSSAKPRQSFFSRTNPQPQSQSQQGGPS) are disordered. The segment covering 72-87 (ASSSAKPRQSFFSRTN) has biased composition (polar residues). Over residues 88–100 (PQPQSQSQQGGPS) the composition is skewed to low complexity. A helical membrane pass occupies residues 127–147 (GIANAFWTIVGTLAGAALGFI).

This sequence belongs to the DnaJ family.

It localises to the endoplasmic reticulum membrane. This is an uncharacterized protein from Schizosaccharomyces pombe (strain 972 / ATCC 24843) (Fission yeast).